The primary structure comprises 355 residues: Putative inositol monophosphatase 3 (355 aa).

Residues 16–36 form a helical membrane-spanning segment; the sequence is VPATIFAILLTIVLVYFLNFH. Mg(2+) is bound by residues Glu127, Asp167, Leu169, Asp170, and Asp292. A substrate-binding site is contributed by Glu127. Residues 169-172 and Asp292 contribute to the substrate site; that span reads LDAT.

It belongs to the inositol monophosphatase superfamily. Mg(2+) is required as a cofactor.

It localises to the membrane. The catalysed reaction is a myo-inositol phosphate + H2O = myo-inositol + phosphate. Its pathway is polyol metabolism; myo-inositol biosynthesis; myo-inositol from D-glucose 6-phosphate: step 2/2. The sequence is that of Putative inositol monophosphatase 3 from Drosophila pseudoobscura pseudoobscura (Fruit fly).